Consider the following 320-residue polypeptide: Pyrroline-5-carboxylate reductase 2 (320 aa).

An N-acetylserine modification is found at S2. NADP(+) contacts are provided by residues 6–11 and S34; that span reads IGAGQL. The NADPH site is built by A8, Q10, L11, S34, E36, N56, V70, K71, and A97. NADP(+) is bound by residues N56, 69-72, and 95-97; these read AVKP and CAA. E164 serves as a coordination point for L-proline. N230 contributes to the NADPH binding site. Positions 237 and 238 each coordinate L-proline. Residues 296 to 305 are compositionally biased toward low complexity; it reads TVSTLTPSSP. The segment at 296–320 is disordered; the sequence is TVSTLTPSSPGKLLTRSLALGGKKD. A Phosphoserine modification is found at S304.

The protein belongs to the pyrroline-5-carboxylate reductase family. Homodecamer; composed of 5 homodimers. Interacts with LTO1.

It localises to the cytoplasm. Its subcellular location is the mitochondrion. The enzyme catalyses L-proline + NADP(+) = (S)-1-pyrroline-5-carboxylate + NADPH + 2 H(+). It carries out the reaction L-proline + NAD(+) = (S)-1-pyrroline-5-carboxylate + NADH + 2 H(+). It participates in amino-acid biosynthesis; L-proline biosynthesis; L-proline from L-glutamate 5-semialdehyde: step 1/1. Functionally, oxidoreductase that catalyzes the last step in proline biosynthesis, which corresponds to the reduction of pyrroline-5-carboxylate to L-proline using NAD(P)H. At physiologic concentrations, has higher specific activity in the presence of NADH. Involved in cellular response to oxidative stress. In some cell types, such as erythrocytes, its primary function may be the generation of NADP(+). This chain is Pyrroline-5-carboxylate reductase 2 (PYCR2), found in Pongo abelii (Sumatran orangutan).